Consider the following 158-residue polypeptide: NKG2-F type II integral membrane protein (158 aa).

The span at 1–12 (MNKQRGTYSEVS) shows a compositional bias: polar residues. A disordered region spans residues 1–30 (MNKQRGTYSEVSLAQDPKRQQRKLKGNKSS). Topologically, residues 1-74 (MNKQRGTYSE…LPPPERLTAE (74 aa)) are cytoplasmic. A helical transmembrane segment spans residues 75 to 95 (VLGIICIVLMATVLKTIVLIP). Residues 96–158 (CIGVLEQNNF…VLQRTLICFL (63 aa)) are Extracellular-facing.

Can form disulfide-bonded heterodimer with CD94. As to expression, natural killer cells.

The protein localises to the membrane. Its function is as follows. May play a role as a receptor for the recognition of MHC class I HLA-E molecules by NK cells. This is NKG2-F type II integral membrane protein (KLRC4) from Pan troglodytes (Chimpanzee).